Consider the following 353-residue polypeptide: Probable dual-specificity RNA methyltransferase RlmN (353 aa).

The active-site Proton acceptor is the glutamate 104. A Radical SAM core domain is found at 112–341 (DGGRKTICIS…ILNRRSPGKD (230 aa)). Cysteine 119 and cysteine 346 are disulfide-bonded. 3 residues coordinate [4Fe-4S] cluster: cysteine 126, cysteine 130, and cysteine 133. Residues 173 to 174 (GE), serine 205, 228 to 230 (SLN), and asparagine 304 contribute to the S-adenosyl-L-methionine site. The active-site S-methylcysteine intermediate is the cysteine 346.

The protein belongs to the radical SAM superfamily. RlmN family. [4Fe-4S] cluster is required as a cofactor.

The protein localises to the cytoplasm. The catalysed reaction is adenosine(2503) in 23S rRNA + 2 reduced [2Fe-2S]-[ferredoxin] + 2 S-adenosyl-L-methionine = 2-methyladenosine(2503) in 23S rRNA + 5'-deoxyadenosine + L-methionine + 2 oxidized [2Fe-2S]-[ferredoxin] + S-adenosyl-L-homocysteine. The enzyme catalyses adenosine(37) in tRNA + 2 reduced [2Fe-2S]-[ferredoxin] + 2 S-adenosyl-L-methionine = 2-methyladenosine(37) in tRNA + 5'-deoxyadenosine + L-methionine + 2 oxidized [2Fe-2S]-[ferredoxin] + S-adenosyl-L-homocysteine. Its function is as follows. Specifically methylates position 2 of adenine 2503 in 23S rRNA and position 2 of adenine 37 in tRNAs. The chain is Probable dual-specificity RNA methyltransferase RlmN from Leptospira interrogans serogroup Icterohaemorrhagiae serovar Lai (strain 56601).